The following is a 215-amino-acid chain: Cytochrome b6 (215 aa).

A helical membrane pass occupies residues 32-52 (IFYCLGGITFTCFIIQVATGF). C35 contributes to the heme c binding site. The heme b site is built by H86 and H100. Transmembrane regions (helical) follow at residues 90 to 110 (ASMM…TGGF), 116 to 136 (LTWV…VTGY), and 186 to 206 (LHTF…FLMI). 2 residues coordinate heme b: H187 and H202.

This sequence belongs to the cytochrome b family. PetB subfamily. The 4 large subunits of the cytochrome b6-f complex are cytochrome b6, subunit IV (17 kDa polypeptide, PetD), cytochrome f and the Rieske protein, while the 4 small subunits are PetG, PetL, PetM and PetN. The complex functions as a dimer. Heme b is required as a cofactor. Heme c serves as cofactor.

Its subcellular location is the plastid. It is found in the chloroplast thylakoid membrane. Functionally, component of the cytochrome b6-f complex, which mediates electron transfer between photosystem II (PSII) and photosystem I (PSI), cyclic electron flow around PSI, and state transitions. This is Cytochrome b6 from Euglena gracilis.